A 399-amino-acid chain; its full sequence is Serine/threonine-protein kinase PknL (399 aa).

At 1–368 (MVEAGTRDPL…FIWARQHARR (368 aa)) the chain is on the cytoplasmic side. Positions 19–278 (YLVQAKIASG…IAMGADLEAI (260 aa)) constitute a Protein kinase domain. Residues 25–33 (IASGGTSTV) and Lys-48 contribute to the ATP site. The active-site Proton acceptor is Asp-142. The segment at 312-346 (GQLGAKPVHHPTRQLTRQPGDCSEPASGSEPEHEP) is disordered. The chain crosses the membrane as a helical span at residues 369 to 389 (MVLVWVSVVLAITGLVASAAW). At 390–399 (TIGSNLSGLL) the chain is on the extracellular side.

It belongs to the protein kinase superfamily. Ser/Thr protein kinase family. In terms of processing, autophosphorylated.

Its subcellular location is the cell membrane. The enzyme catalyses L-seryl-[protein] + ATP = O-phospho-L-seryl-[protein] + ADP + H(+). The catalysed reaction is L-threonyl-[protein] + ATP = O-phospho-L-threonyl-[protein] + ADP + H(+). This Mycobacterium bovis (strain ATCC BAA-935 / AF2122/97) protein is Serine/threonine-protein kinase PknL (pknL).